The sequence spans 501 residues: Probable pectate lyase 13 (501 aa).

The signal sequence occupies residues 1–22; sequence MLLQNFSNTIFLLCLFFTLLSA. N-linked (GlcNAc...) asparagine glycans are attached at residues asparagine 27 and asparagine 49. Residues 55–78 form a disordered region; it reads RQLSSPSSSSSSSSSSSSSSCRTG. Low complexity predominate over residues 58–74; the sequence is SSPSSSSSSSSSSSSSS. Residues aspartate 217, aspartate 241, and aspartate 245 each contribute to the Ca(2+) site. The active site involves arginine 297. Disordered stretches follow at residues 329–359 and 408–463; these read INSQGNRYSAPSDPSAKEVTKRVDSKDDGEW and NAGV…SSGD. The span at 343–357 shows a compositional bias: basic and acidic residues; it reads SAKEVTKRVDSKDDG. Gly residues predominate over residues 430–449; it reads GGDGGGGGSSGGSSGGGMDV. A compositionally biased stretch (low complexity) spans 450-463; that stretch reads MGGTTRGSSSSSGD. Serine 474 is lipidated: GPI-anchor amidated serine. Positions 475-501 are cleaved as a propeptide — removed in mature form; the sequence is DAPSRPRLTLLFSLLMISVLSLSTLLL.

The protein belongs to the polysaccharide lyase 1 family. Requires Ca(2+) as cofactor. Expressed equally in mature leaves, buds, flowers, rosettes and roots.

It localises to the cell membrane. The enzyme catalyses Eliminative cleavage of (1-&gt;4)-alpha-D-galacturonan to give oligosaccharides with 4-deoxy-alpha-D-galact-4-enuronosyl groups at their non-reducing ends.. Its pathway is glycan metabolism; pectin degradation; 2-dehydro-3-deoxy-D-gluconate from pectin: step 2/5. In terms of biological role, susceptibility factor required for infection by most powdery mildews, but not by unrelated pathogens. Exact function not known, but clearly affects cell wall composition. The chain is Probable pectate lyase 13 (PMR6) from Arabidopsis thaliana (Mouse-ear cress).